The sequence spans 282 residues: MLEQCSKNIEKLRNKCPLTHCITNYVTINDCANVVLAIGGSPAMANEAPEIEEFVEAAGVTIINMGTLLEDQIEPMQIAACHTKKTNTPLVLDPVAVGVSKLRNDITIDLINKSSVDVIRGNMSEIKAIANLFNITDEKSVAKGVDVSSDDIITKDNIKSNASLVKAVADKLNTTIAVSGAIDIISDGVSIYLIDNGEEVMSKITGSGCMLTCVIGSFCAITSPLEAAIIGSLSMAISGELARRKMEINNEGSGSFRTYLIDMMYNMNDETIMKYGKLYKLE.

Methionine 44 is a substrate binding site. 2 residues coordinate ATP: arginine 120 and serine 179. A substrate-binding site is contributed by glycine 206.

Belongs to the Thz kinase family. The cofactor is Mg(2+).

The catalysed reaction is 5-(2-hydroxyethyl)-4-methylthiazole + ATP = 4-methyl-5-(2-phosphooxyethyl)-thiazole + ADP + H(+). It functions in the pathway cofactor biosynthesis; thiamine diphosphate biosynthesis; 4-methyl-5-(2-phosphoethyl)-thiazole from 5-(2-hydroxyethyl)-4-methylthiazole: step 1/1. Catalyzes the phosphorylation of the hydroxyl group of 4-methyl-5-beta-hydroxyethylthiazole (THZ). This Methanosphaera stadtmanae (strain ATCC 43021 / DSM 3091 / JCM 11832 / MCB-3) protein is Hydroxyethylthiazole kinase 2.